The primary structure comprises 137 residues: Hydrogenase-4 component J (137 aa).

It to E.coli HycH.

Functionally, possible component of hydrogenase 4. The protein is Hydrogenase-4 component J of Escherichia coli (strain K12).